The sequence spans 394 residues: NAD(P)H-quinone oxidoreductase subunit H 2 (394 aa).

This sequence belongs to the complex I 49 kDa subunit family. As to quaternary structure, NDH-1 can be composed of about 15 different subunits; different subcomplexes with different compositions have been identified which probably have different functions.

It is found in the cell inner membrane. It carries out the reaction a plastoquinone + NADH + (n+1) H(+)(in) = a plastoquinol + NAD(+) + n H(+)(out). The catalysed reaction is a plastoquinone + NADPH + (n+1) H(+)(in) = a plastoquinol + NADP(+) + n H(+)(out). Its function is as follows. NDH-1 shuttles electrons from an unknown electron donor, via FMN and iron-sulfur (Fe-S) centers, to quinones in the respiratory and/or the photosynthetic chain. The immediate electron acceptor for the enzyme in this species is believed to be plastoquinone. Couples the redox reaction to proton translocation, and thus conserves the redox energy in a proton gradient. Cyanobacterial NDH-1 also plays a role in inorganic carbon-concentration. The protein is NAD(P)H-quinone oxidoreductase subunit H 2 of Gloeobacter violaceus (strain ATCC 29082 / PCC 7421).